The chain runs to 109 residues: MNMLAYFLYCRQLLLAVVLIEFPPRLCGNTLRFYSYHLPLSTCHISDSFYLTSRTTSNLLFCHLLYCHQKSHQKSHQKKTTGYLKLFSNTIENIKNMFNSSPYTLSTTA.

An N-terminal signal peptide occupies residues 1-28; the sequence is MNMLAYFLYCRQLLLAVVLIEFPPRLCG.

This is an uncharacterized protein from Homo sapiens (Human).